Reading from the N-terminus, the 63-residue chain is uncharacterized protein (63 aa).

Residues 37 to 57 (IFFPTTFDVLLLAILIFLACA) form a helical membrane-spanning segment.

The protein localises to the cell membrane. This is an uncharacterized protein from Bacillus subtilis (strain 168).